Reading from the N-terminus, the 505-residue chain is ATP synthase subunit alpha (505 aa).

170–177 (GDRQTGKT) contacts ATP.

The protein belongs to the ATPase alpha/beta chains family. As to quaternary structure, F-type ATPases have 2 components, CF(1) - the catalytic core - and CF(0) - the membrane proton channel. CF(1) has five subunits: alpha(3), beta(3), gamma(1), delta(1), epsilon(1). CF(0) has four main subunits: a(1), b(1), b'(1) and c(9-12).

It localises to the cellular thylakoid membrane. It carries out the reaction ATP + H2O + 4 H(+)(in) = ADP + phosphate + 5 H(+)(out). In terms of biological role, produces ATP from ADP in the presence of a proton gradient across the membrane. The alpha chain is a regulatory subunit. This is ATP synthase subunit alpha from Prochlorococcus marinus subsp. pastoris (strain CCMP1986 / NIES-2087 / MED4).